The sequence spans 473 residues: Adenosylhomocysteinase (473 aa).

Substrate is bound by residues Thr-64, Asp-139, and Glu-199. NAD(+) is bound at residue 200–202 (TTT). Substrate contacts are provided by Lys-229 and Asp-233. NAD(+) is bound by residues Asn-234, 263-268 (GYGDVG), Glu-286, Asn-321, 342-344 (IGH), and Asn-387.

This sequence belongs to the adenosylhomocysteinase family. NAD(+) is required as a cofactor.

The protein resides in the cytoplasm. It carries out the reaction S-adenosyl-L-homocysteine + H2O = L-homocysteine + adenosine. Its pathway is amino-acid biosynthesis; L-homocysteine biosynthesis; L-homocysteine from S-adenosyl-L-homocysteine: step 1/1. May play a key role in the regulation of the intracellular concentration of adenosylhomocysteine. The sequence is that of Adenosylhomocysteinase from Paraburkholderia phymatum (strain DSM 17167 / CIP 108236 / LMG 21445 / STM815) (Burkholderia phymatum).